The primary structure comprises 129 residues: Sulfurtransferase TusD (129 aa).

The active-site Cysteine persulfide intermediate is the C79.

Belongs to the DsrE/TusD family. Heterohexamer, formed by a dimer of trimers. The hexameric TusBCD complex contains 2 copies each of TusB, TusC and TusD. The TusBCD complex interacts with TusE.

It localises to the cytoplasm. Functionally, part of a sulfur-relay system required for 2-thiolation of 5-methylaminomethyl-2-thiouridine (mnm(5)s(2)U) at tRNA wobble positions. Accepts sulfur from TusA and transfers it in turn to TusE. This Pectobacterium atrosepticum (strain SCRI 1043 / ATCC BAA-672) (Erwinia carotovora subsp. atroseptica) protein is Sulfurtransferase TusD.